The sequence spans 214 residues: Reticulon-3-B (214 aa).

The tract at residues 1 to 22 (MAETSGPQSSHISSSSAGDKGS) is disordered. The region spanning 26–214 (VRDLLYWRDV…LPGALKKKSE (189 aa)) is the Reticulon domain. 2 consecutive transmembrane segments (helical) span residues 46–66 (MVLLLSLAAFSIISVISYLVL) and 150–170 (TYIGAVFNGITLLILGVLLAF).

As to quaternary structure, homodimer.

The protein localises to the endoplasmic reticulum membrane. The protein resides in the golgi apparatus membrane. Functionally, may be involved in membrane trafficking in the early secretory pathway. The protein is Reticulon-3-B (rtn3-b) of Xenopus laevis (African clawed frog).